A 274-amino-acid chain; its full sequence is Mitochondrial outer membrane protein porin 4 (274 aa).

Glycine 2 is subject to N-acetylglycine. Residue serine 76 is modified to Phosphoserine.

The protein belongs to the eukaryotic mitochondrial porin (TC 1.B.8.1) family. As to expression, widely expressed.

Its subcellular location is the cell membrane. It localises to the mitochondrion outer membrane. Forms a channel through the mitochondrial outer membrane that allows diffusion of small hydrophilic molecules. The channel adopts an open conformation at low or zero membrane potential and a closed conformation at potentials above 30-40 mV. The open state has a weak anion selectivity whereas the closed state is cation-selective. Involved in plant growth and development at the vegetative and reproductive stages. Is important for leaf and pollen development and mitochondrial membrane potential steady state. May be involved in disease resistance. This Arabidopsis thaliana (Mouse-ear cress) protein is Mitochondrial outer membrane protein porin 4 (VDAC4).